The following is an 84-amino-acid chain: Large ribosomal subunit protein bL27 (84 aa).

The interval 1-21 (MAHKKGGGSTKNGRDSNPKYL) is disordered.

It belongs to the bacterial ribosomal protein bL27 family.

This chain is Large ribosomal subunit protein bL27, found in Chlorobium luteolum (strain DSM 273 / BCRC 81028 / 2530) (Pelodictyon luteolum).